The following is a 317-amino-acid chain: Probable arabinan endo-1,5-alpha-L-arabinosidase C (317 aa).

Positions 1–17 are cleaved as a signal peptide; the sequence is MLSFLAALSLPLALVNA. D32 serves as the catalytic Proton acceptor. The N-linked (GlcNAc...) asparagine glycan is linked to N190. E198 functions as the Proton donor in the catalytic mechanism.

The protein belongs to the glycosyl hydrolase 43 family.

It is found in the secreted. It catalyses the reaction Endohydrolysis of (1-&gt;5)-alpha-arabinofuranosidic linkages in (1-&gt;5)-arabinans.. The protein operates within glycan metabolism; L-arabinan degradation. Endo-1,5-alpha-L-arabinanase involved in degradation of pectin. Its preferred substrate is linear 1,5-alpha-L-arabinan. The sequence is that of Probable arabinan endo-1,5-alpha-L-arabinosidase C (abnC) from Aspergillus flavus (strain ATCC 200026 / FGSC A1120 / IAM 13836 / NRRL 3357 / JCM 12722 / SRRC 167).